The following is a 921-amino-acid chain: cGMP-dependent 3',5'-cyclic phosphodiesterase (921 aa).

Met1 bears the N-acetylmethionine mark. Disordered regions lie at residues 1–21 and 177–198; these read MRRQ…PPGS and ESSV…DQKG. Residues 177-188 are compositionally biased toward polar residues; the sequence is ESSVAPEATQNP. GAF domains lie at 220–357 and 389–528; these read DASS…STVL and DVSV…GISI. 3',5'-cyclic GMP contacts are provided by Ser411, Asp426, Ile445, Tyr468, and Thr479. The 325-residue stretch at 558–882 folds into the PDEase domain; it reads SDDEYTKLLH…EHWTKVSHKF (325 aa). The active-site Proton donor is the His636. Residues His640, His676, Asp677, and Asp788 each contribute to the Zn(2+) site. Asp677 is a Mg(2+) binding site.

The protein belongs to the cyclic nucleotide phosphodiesterase family. PDE2 subfamily. Homodimer. Zn(2+) is required as a cofactor. Mg(2+) serves as cofactor.

Its subcellular location is the cell membrane. It localises to the cytoplasm. The protein resides in the mitochondrion. It is found in the mitochondrion inner membrane. The protein localises to the mitochondrion outer membrane. It catalyses the reaction a nucleoside 3',5'-cyclic phosphate + H2O = a nucleoside 5'-phosphate + H(+). The enzyme catalyses 3',5'-cyclic GMP + H2O = GMP + H(+). The catalysed reaction is 3',5'-cyclic AMP + H2O = AMP + H(+). With respect to regulation, the 3',5'-cyclic-AMP phosphodiesterase activity is stimulated by 3',5'-cyclic GMP. In terms of biological role, cGMP-activated cyclic nucleotide phosphodiesterase with a dual-specificity for the second messengers cAMP and cGMP, which are key regulators of many important physiological processes. Has a higher efficiency with cGMP compared to cAMP. Plays a role in cell growth and migration. Regulates mitochondrial cAMP levels and respiration. Involved in the regulation of mitochondria morphology/dynamics and apoptotic cell death via local modulation of cAMP/PKA signaling in the mitochondrion, including the monitoring of local cAMP levels at the outer mitochondrial membrane and of PKA-dependent phosphorylation of DNM1L. This Bos taurus (Bovine) protein is cGMP-dependent 3',5'-cyclic phosphodiesterase.